A 134-amino-acid chain; its full sequence is Transcriptional activator protein (134 aa).

The Nuclear localization signal motif lies at 17–31 (KVQHRIAKKTTRRRR). A zinc finger spans residues 36-53 (CGCSYFVALGCHNHGFTH). A disordered region spans residues 73 to 103 (KSPVFQDNQTPRETISEEPRHNHNTSPIQLQ). The segment covering 75 to 85 (PVFQDNQTPRE) has biased composition (polar residues). The interval 119-134 (NLDSFTSSDLAFLKSI) is transactivation.

Belongs to the geminiviridae transcriptional activator protein family. As to quaternary structure, monomer. Homodimer. Homooligomer. Self-interaction correlates with nuclear localization and efficient activation of transcription. Monomers suppress local silencing by interacting with and inactivating host adenosine kinase 2 (ADK2) in the cytoplasm. Interacts with and inhibits host SNF1 kinase. Binds to ssDNA. May interact with host RPS27A. Phosphorylated.

The protein localises to the host nucleus. The protein resides in the host cytoplasm. Multifunctional protein that modulates host antiviral defenses and promotes host attractiveness to insect vectors. Acts as a suppressor of RNA-mediated gene silencing, also known as post-transcriptional gene silencing (PTGS), a mechanism of plant viral defense that limits the accumulation of viral RNAs. TrAP suppresses the host RNA silencing by inhibiting adenosine kinase 2 (ADK2), a kinase involved in a general methylation pathway. Also suppresses the host basal defense by interacting with and inhibiting SNF1 kinase, a key regulator of cell metabolism implicated in innate antiviral defense. Its function is as follows. Inhibits signal transduction by the phytohormone jasmonate, making the infected plant more attractive to aphids, which are the second host to play a role as a dissemination vector. Acts by binding to ubiquitin precursor RPS27A, thereby preventing ubiquitin degradation of JAZ. The polypeptide is Transcriptional activator protein (Tomato yellow leaf curl China virus (TYLCCNV)).